We begin with the raw amino-acid sequence, 203 residues long: Holliday junction branch migration complex subunit RuvA (203 aa).

The domain I stretch occupies residues 1–64 (MIGRLNGILV…EDAQLLYGFI (64 aa)). Residues 65 to 143 (TKQERALFRL…SLLEASVGNE (79 aa)) form a domain II region. The flexible linker stretch occupies residues 144 to 154 (REFMLQTNYTA). The tract at residues 155–203 (PAANAEEDAISALVSLGYKPPQASRAVSKAYKEGMDTETLIKLALKSML) is domain III.

Belongs to the RuvA family. In terms of assembly, homotetramer. Forms an RuvA(8)-RuvB(12)-Holliday junction (HJ) complex. HJ DNA is sandwiched between 2 RuvA tetramers; dsDNA enters through RuvA and exits via RuvB. An RuvB hexamer assembles on each DNA strand where it exits the tetramer. Each RuvB hexamer is contacted by two RuvA subunits (via domain III) on 2 adjacent RuvB subunits; this complex drives branch migration. In the full resolvosome a probable DNA-RuvA(4)-RuvB(12)-RuvC(2) complex forms which resolves the HJ.

Its subcellular location is the cytoplasm. The RuvA-RuvB-RuvC complex processes Holliday junction (HJ) DNA during genetic recombination and DNA repair, while the RuvA-RuvB complex plays an important role in the rescue of blocked DNA replication forks via replication fork reversal (RFR). RuvA specifically binds to HJ cruciform DNA, conferring on it an open structure. The RuvB hexamer acts as an ATP-dependent pump, pulling dsDNA into and through the RuvAB complex. HJ branch migration allows RuvC to scan DNA until it finds its consensus sequence, where it cleaves and resolves the cruciform DNA. In Shewanella denitrificans (strain OS217 / ATCC BAA-1090 / DSM 15013), this protein is Holliday junction branch migration complex subunit RuvA.